Reading from the N-terminus, the 131-residue chain is Small ribosomal subunit protein uS8 (131 aa).

The protein belongs to the universal ribosomal protein uS8 family. In terms of assembly, part of the 30S ribosomal subunit. Contacts proteins S5 and S12.

Functionally, one of the primary rRNA binding proteins, it binds directly to 16S rRNA central domain where it helps coordinate assembly of the platform of the 30S subunit. This chain is Small ribosomal subunit protein uS8, found in Bordetella avium (strain 197N).